Reading from the N-terminus, the 213-residue chain is Imidazoleglycerol-phosphate dehydratase (213 aa).

Belongs to the imidazoleglycerol-phosphate dehydratase family.

The protein localises to the cytoplasm. The enzyme catalyses D-erythro-1-(imidazol-4-yl)glycerol 3-phosphate = 3-(imidazol-4-yl)-2-oxopropyl phosphate + H2O. The protein operates within amino-acid biosynthesis; L-histidine biosynthesis; L-histidine from 5-phospho-alpha-D-ribose 1-diphosphate: step 6/9. The protein is Imidazoleglycerol-phosphate dehydratase of Trichodesmium erythraeum (strain IMS101).